Consider the following 293-residue polypeptide: Formamidopyrimidine-DNA glycosylase (293 aa).

Catalysis depends on P2, which acts as the Schiff-base intermediate with DNA. Catalysis depends on E3, which acts as the Proton donor. K60 acts as the Proton donor; for beta-elimination activity in catalysis. Positions 110, 129, and 174 each coordinate DNA. The segment at 259 to 293 (NVYRRTGKECRKCGNLIERKKISGRSTHWCPKCQK) adopts an FPG-type zinc-finger fold. Residue R283 is the Proton donor; for delta-elimination activity of the active site.

The protein belongs to the FPG family. As to quaternary structure, monomer. The cofactor is Zn(2+).

The catalysed reaction is Hydrolysis of DNA containing ring-opened 7-methylguanine residues, releasing 2,6-diamino-4-hydroxy-5-(N-methyl)formamidopyrimidine.. It catalyses the reaction 2'-deoxyribonucleotide-(2'-deoxyribose 5'-phosphate)-2'-deoxyribonucleotide-DNA = a 3'-end 2'-deoxyribonucleotide-(2,3-dehydro-2,3-deoxyribose 5'-phosphate)-DNA + a 5'-end 5'-phospho-2'-deoxyribonucleoside-DNA + H(+). Functionally, involved in base excision repair of DNA damaged by oxidation or by mutagenic agents. Acts as a DNA glycosylase that recognizes and removes damaged bases. Has a preference for oxidized purines, such as 7,8-dihydro-8-oxoguanine (8-oxoG). Has AP (apurinic/apyrimidinic) lyase activity and introduces nicks in the DNA strand. Cleaves the DNA backbone by beta-delta elimination to generate a single-strand break at the site of the removed base with both 3'- and 5'-phosphates. This chain is Formamidopyrimidine-DNA glycosylase, found in Prochlorococcus marinus (strain MIT 9215).